A 634-amino-acid polypeptide reads, in one-letter code: Probable potassium transport system protein Kup (634 aa).

The next 12 helical transmembrane spans lie at 19 to 39, 62 to 82, 113 to 133, 150 to 170, 177 to 197, 225 to 245, 259 to 279, 291 to 311, 349 to 369, 379 to 399, 406 to 426, and 431 to 451; these read AIGL…TSPL, VLSL…VIFV, FVVV…MITP, GLEH…FLIQ, IGIL…ALGV, IGVA…ALYA, WFLL…ATIL, LLAP…ATVI, IYIG…VLGF, YGVA…VVIW, LWLG…FFAA, and VIQG…LMST.

Belongs to the HAK/KUP transporter (TC 2.A.72) family.

It is found in the cell inner membrane. The enzyme catalyses K(+)(in) + H(+)(in) = K(+)(out) + H(+)(out). Its function is as follows. Transport of potassium into the cell. Likely operates as a K(+):H(+) symporter. This is Probable potassium transport system protein Kup from Pseudomonas aeruginosa (strain LESB58).